The sequence spans 346 residues: Small ribosomal subunit biogenesis GTPase RsgA (346 aa).

The disordered stretch occupies residues methionine 1–lysine 26. Over residues threonine 7–lysine 20 the composition is skewed to polar residues. The region spanning glutamate 103–phenylalanine 271 is the CP-type G domain. Residues asparagine 159–aspartate 162 and glycine 213–serine 221 contribute to the GTP site. Cysteine 295, cysteine 300, histidine 302, and cysteine 308 together coordinate Zn(2+).

The protein belongs to the TRAFAC class YlqF/YawG GTPase family. RsgA subfamily. Monomer. Associates with 30S ribosomal subunit, binds 16S rRNA. Zn(2+) serves as cofactor.

It localises to the cytoplasm. Functionally, one of several proteins that assist in the late maturation steps of the functional core of the 30S ribosomal subunit. Helps release RbfA from mature subunits. May play a role in the assembly of ribosomal proteins into the subunit. Circularly permuted GTPase that catalyzes slow GTP hydrolysis, GTPase activity is stimulated by the 30S ribosomal subunit. This is Small ribosomal subunit biogenesis GTPase RsgA from Haemophilus influenzae (strain 86-028NP).